The chain runs to 410 residues: LL-diaminopimelate aminotransferase (410 aa).

Substrate contacts are provided by Y15 and G42. Pyridoxal 5'-phosphate contacts are provided by residues Y72, 108 to 109, Y132, N187, Y218, and 246 to 248; these read AK and SFS. Substrate contacts are provided by K109, Y132, and N187. At K249 the chain carries N6-(pyridoxal phosphate)lysine. Pyridoxal 5'-phosphate contacts are provided by R257 and N292. Residues N292 and R388 each coordinate substrate.

This sequence belongs to the class-I pyridoxal-phosphate-dependent aminotransferase family. LL-diaminopimelate aminotransferase subfamily. As to quaternary structure, homodimer. The cofactor is pyridoxal 5'-phosphate.

It catalyses the reaction (2S,6S)-2,6-diaminopimelate + 2-oxoglutarate = (S)-2,3,4,5-tetrahydrodipicolinate + L-glutamate + H2O + H(+). It functions in the pathway amino-acid biosynthesis; L-lysine biosynthesis via DAP pathway; LL-2,6-diaminopimelate from (S)-tetrahydrodipicolinate (aminotransferase route): step 1/1. In terms of biological role, involved in the synthesis of meso-diaminopimelate (m-DAP or DL-DAP), required for both lysine and peptidoglycan biosynthesis. Catalyzes the direct conversion of tetrahydrodipicolinate to LL-diaminopimelate. The sequence is that of LL-diaminopimelate aminotransferase from Picosynechococcus sp. (strain ATCC 27264 / PCC 7002 / PR-6) (Agmenellum quadruplicatum).